A 56-amino-acid chain; its full sequence is Conotoxin Bu12 (56 aa).

The first 2 residues, 1–2 (TA), serve as a signal peptide directing secretion. A propeptide spanning residues 3 to 25 (EDSRGTQLHRALRKATKLPVSTR) is cleaved from the precursor. Disulfide bonds link C26–C40, C33–C44, and C39–C49.

The protein belongs to the conotoxin O1 superfamily. In terms of tissue distribution, expressed by the venom duct.

It localises to the secreted. This is Conotoxin Bu12 from Conus bullatus (Bubble cone).